A 505-amino-acid chain; its full sequence is Putative thymidine phosphorylase (505 aa).

Belongs to the thymidine/pyrimidine-nucleoside phosphorylase family. Type 2 subfamily.

The enzyme catalyses thymidine + phosphate = 2-deoxy-alpha-D-ribose 1-phosphate + thymine. This chain is Putative thymidine phosphorylase, found in Parvibaculum lavamentivorans (strain DS-1 / DSM 13023 / NCIMB 13966).